The chain runs to 88 residues: MFGQRQSMIVYLHSLKHAKILRKYGNIHYISKRLKYAVVYCDMEQIEHMMQKLNKLPFVKKIEQSYRPYLKTEFENSRPDRAKEYDYS.

It belongs to the UPF0298 family.

Its subcellular location is the cytoplasm. This chain is UPF0298 protein BA_4142/GBAA_4142/BAS3844, found in Bacillus anthracis.